We begin with the raw amino-acid sequence, 637 residues long: 1-deoxy-D-xylulose-5-phosphate synthase (637 aa).

Thiamine diphosphate contacts are provided by residues His71 and 112 to 114; that span reads SHA. Asp144 provides a ligand contact to Mg(2+). Thiamine diphosphate contacts are provided by residues 145–146, Asn173, Tyr284, and Glu365; that span reads GA. Residue Asn173 coordinates Mg(2+).

The protein belongs to the transketolase family. DXPS subfamily. Homodimer. It depends on Mg(2+) as a cofactor. The cofactor is thiamine diphosphate.

It catalyses the reaction D-glyceraldehyde 3-phosphate + pyruvate + H(+) = 1-deoxy-D-xylulose 5-phosphate + CO2. The protein operates within metabolic intermediate biosynthesis; 1-deoxy-D-xylulose 5-phosphate biosynthesis; 1-deoxy-D-xylulose 5-phosphate from D-glyceraldehyde 3-phosphate and pyruvate: step 1/1. In terms of biological role, catalyzes the acyloin condensation reaction between C atoms 2 and 3 of pyruvate and glyceraldehyde 3-phosphate to yield 1-deoxy-D-xylulose-5-phosphate (DXP). The sequence is that of 1-deoxy-D-xylulose-5-phosphate synthase from Mycolicibacterium gilvum (strain PYR-GCK) (Mycobacterium gilvum (strain PYR-GCK)).